The sequence spans 455 residues: Trigger factor (455 aa).

Positions glycine 169–proline 262 constitute a PPIase FKBP-type domain.

The protein belongs to the FKBP-type PPIase family. Tig subfamily.

It is found in the cytoplasm. It carries out the reaction [protein]-peptidylproline (omega=180) = [protein]-peptidylproline (omega=0). Functionally, involved in protein export. Acts as a chaperone by maintaining the newly synthesized protein in an open conformation. Functions as a peptidyl-prolyl cis-trans isomerase. This chain is Trigger factor, found in Rippkaea orientalis (strain PCC 8801 / RF-1) (Cyanothece sp. (strain PCC 8801)).